We begin with the raw amino-acid sequence, 302 residues long: m7GpppN-mRNA hydrolase NUDT17 (302 aa).

Residues 89–237 (GRGVDLGVAV…DGTETPKHLP (149 aa)) enclose the Nudix hydrolase domain. A Nudix box motif is present at residues 128–149 (GHVEPDEELLDGGLRELWEESG). Residues E143 and E147 each contribute to the Mg(2+) site.

It belongs to the Nudix hydrolase family. Requires Mg(2+) as cofactor. Mn(2+) is required as a cofactor.

It catalyses the reaction a 5'-end (N(7)-methyl 5'-triphosphoguanosine)-ribonucleoside in mRNA + H2O = N(7)-methyl-GDP + a 5'-end phospho-ribonucleoside in mRNA + 2 H(+). Functionally, acts as a decapping enzyme capable of hydrolyzing monomethylated capped RNAs (in vitro). Hydrolyzes monomethylated capped RNA after alpha and beta phosphates to form N(7)-methyl-GDP. Shows low activity towards unmethylated capped RNA. This chain is m7GpppN-mRNA hydrolase NUDT17 (NUDT17), found in Bos taurus (Bovine).